The following is a 120-amino-acid chain: Flagellar protein FliT (120 aa).

Residues M1–I50 form a required for homodimerization region. Residues L60–R98 form a fliD binding region.

Belongs to the FliT family. Homodimer. Interacts with FliD and FlhC.

Its subcellular location is the cytoplasm. It localises to the cytosol. Dual-function protein that regulates the transcription of class 2 flagellar operons and that also acts as an export chaperone for the filament-capping protein FliD. As a transcriptional regulator, acts as an anti-FlhDC factor; it directly binds FlhC, thus inhibiting the binding of the FlhC/FlhD complex to class 2 promoters, resulting in decreased expression of class 2 flagellar operons. As a chaperone, effects FliD transition to the membrane by preventing its premature polymerization, and by directing it to the export apparatus. This is Flagellar protein FliT from Yersinia pestis bv. Antiqua (strain Antiqua).